An 80-amino-acid chain; its full sequence is uncharacterized protein (80 aa).

This is an uncharacterized protein from Haemophilus influenzae (strain ATCC 51907 / DSM 11121 / KW20 / Rd).